A 458-amino-acid polypeptide reads, in one-letter code: UDP-N-acetylmuramate--L-alanine ligase (458 aa).

An ATP-binding site is contributed by 118–124 (GTHGKTT).

The protein belongs to the MurCDEF family.

It localises to the cytoplasm. The enzyme catalyses UDP-N-acetyl-alpha-D-muramate + L-alanine + ATP = UDP-N-acetyl-alpha-D-muramoyl-L-alanine + ADP + phosphate + H(+). It participates in cell wall biogenesis; peptidoglycan biosynthesis. In terms of biological role, cell wall formation. This chain is UDP-N-acetylmuramate--L-alanine ligase, found in Clostridium botulinum (strain Kyoto / Type A2).